Reading from the N-terminus, the 89-residue chain is Calsenilin isoform 4 (89 aa).

The interval 27–57 (SSRDAEDQGSREGIGWQPPGRSWAHTTEQEG) is disordered.

Isoform 1 or isoform 4 (T+ forms) are expressed at equal levels with isoform 2 or isoform 3 (T- forms) in brain.

In terms of biological role, unknown for isoform 4. Csen is involved in calcium-dependent transcriptional repression, regulation of potassium channels, and perhaps in processing of PSEN2 and apoptosis. This chain is Calsenilin isoform 4 (Kcnip3), found in Mus musculus (Mouse).